A 311-amino-acid polypeptide reads, in one-letter code: ADP-L-glycero-D-manno-heptose-6-epimerase (311 aa).

NADP(+) contacts are provided by residues 10–11 (FI), 31–32 (DD), lysine 38, lysine 53, 75–79 (EGACS), and asparagine 92. The Proton acceptor role is filled by tyrosine 139. Residue lysine 143 participates in NADP(+) binding. Asparagine 174 is a substrate binding site. 2 residues coordinate NADP(+): valine 175 and lysine 183. The Proton acceptor role is filled by lysine 183. Substrate is bound by residues serine 185, histidine 192, 206–209 (FEGE), arginine 212, and tyrosine 275.

The protein belongs to the NAD(P)-dependent epimerase/dehydratase family. HldD subfamily. As to quaternary structure, homopentamer. The cofactor is NADP(+).

The catalysed reaction is ADP-D-glycero-beta-D-manno-heptose = ADP-L-glycero-beta-D-manno-heptose. The protein operates within nucleotide-sugar biosynthesis; ADP-L-glycero-beta-D-manno-heptose biosynthesis; ADP-L-glycero-beta-D-manno-heptose from D-glycero-beta-D-manno-heptose 7-phosphate: step 4/4. Its function is as follows. Catalyzes the interconversion between ADP-D-glycero-beta-D-manno-heptose and ADP-L-glycero-beta-D-manno-heptose via an epimerization at carbon 6 of the heptose. The polypeptide is ADP-L-glycero-D-manno-heptose-6-epimerase (Psychromonas ingrahamii (strain DSM 17664 / CCUG 51855 / 37)).